The following is a 220-amino-acid chain: Thiamine-phosphate synthase (220 aa).

Residues 39-43 (QLRDK) and N80 contribute to the 4-amino-2-methyl-5-(diphosphooxymethyl)pyrimidine site. Mg(2+) is bound by residues D81 and D100. Residue S119 coordinates 4-amino-2-methyl-5-(diphosphooxymethyl)pyrimidine. 145–147 (TPT) is a binding site for 2-[(2R,5Z)-2-carboxy-4-methylthiazol-5(2H)-ylidene]ethyl phosphate. K148 provides a ligand contact to 4-amino-2-methyl-5-(diphosphooxymethyl)pyrimidine. G176 is a binding site for 2-[(2R,5Z)-2-carboxy-4-methylthiazol-5(2H)-ylidene]ethyl phosphate.

It belongs to the thiamine-phosphate synthase family. The cofactor is Mg(2+).

It carries out the reaction 2-[(2R,5Z)-2-carboxy-4-methylthiazol-5(2H)-ylidene]ethyl phosphate + 4-amino-2-methyl-5-(diphosphooxymethyl)pyrimidine + 2 H(+) = thiamine phosphate + CO2 + diphosphate. The enzyme catalyses 2-(2-carboxy-4-methylthiazol-5-yl)ethyl phosphate + 4-amino-2-methyl-5-(diphosphooxymethyl)pyrimidine + 2 H(+) = thiamine phosphate + CO2 + diphosphate. It catalyses the reaction 4-methyl-5-(2-phosphooxyethyl)-thiazole + 4-amino-2-methyl-5-(diphosphooxymethyl)pyrimidine + H(+) = thiamine phosphate + diphosphate. The protein operates within cofactor biosynthesis; thiamine diphosphate biosynthesis; thiamine phosphate from 4-amino-2-methyl-5-diphosphomethylpyrimidine and 4-methyl-5-(2-phosphoethyl)-thiazole: step 1/1. Functionally, condenses 4-methyl-5-(beta-hydroxyethyl)thiazole monophosphate (THZ-P) and 2-methyl-4-amino-5-hydroxymethyl pyrimidine pyrophosphate (HMP-PP) to form thiamine monophosphate (TMP). The polypeptide is Thiamine-phosphate synthase (Mycobacterium marinum (strain ATCC BAA-535 / M)).